The primary structure comprises 237 residues: (5-formylfuran-3-yl)methyl phosphate synthase (237 aa).

The active-site Schiff-base intermediate with substrate is the Lys-29. Catalysis depends on Lys-87, which acts as the Proton acceptor.

This sequence belongs to the MfnB family.

The catalysed reaction is 2 D-glyceraldehyde 3-phosphate = 4-(hydroxymethyl)-2-furancarboxaldehyde phosphate + phosphate + 2 H2O. It participates in cofactor biosynthesis; methanofuran biosynthesis. Functionally, catalyzes the formation of 4-(hydroxymethyl)-2-furancarboxaldehyde phosphate (4-HFC-P) from two molecules of glyceraldehyde-3-P (GA-3-P). In Methanopyrus kandleri (strain AV19 / DSM 6324 / JCM 9639 / NBRC 100938), this protein is (5-formylfuran-3-yl)methyl phosphate synthase.